Reading from the N-terminus, the 163-residue chain is Ribonuclease P protein subunit p25-like protein (163 aa).

2 disordered regions span residues Met-1–Pro-22 and Asn-129–Phe-163. Positions Pro-154 to Phe-163 are enriched in basic residues.

Belongs to the histone-like Alba family.

The protein localises to the nucleus. Functionally, may be a component of ribonuclease P or MRP. The protein is Ribonuclease P protein subunit p25-like protein (RPP25L) of Bos taurus (Bovine).